We begin with the raw amino-acid sequence, 87 residues long: MFTVIFGRPGCPYCVRAKELAEKLSKERDDFNYRYIDIHAEGITKADLEKTVGKPVETVPQIFVDQKHIGGCTDFEAWAKENLNLFA.

A Glutaredoxin domain is found at 1-87 (MFTVIFGRPG…WAKENLNLFA (87 aa)). A disulfide bond links Cys-11 and Cys-14.

Belongs to the glutaredoxin family. As to quaternary structure, monomer.

In terms of biological role, the disulfide bond functions as an electron carrier in the glutathione-dependent synthesis of deoxyribonucleotides by the enzyme ribonucleotide reductase. In addition, it is also involved in reducing some disulfides in a coupled system with glutathione reductase. In Salmonella typhi, this protein is Glutaredoxin 1 (grxA).